A 447-amino-acid polypeptide reads, in one-letter code: GTPase Der (447 aa).

EngA-type G domains follow at residues 3 to 167 and 181 to 354; these read PVIA…FAER and TRIA…AAAM. Residues 9–16, 56–60, 119–122, 187–194, 234–238, and 299–302 each bind GTP; these read GRPNVGKS, DTGGF, NKAE, DTAGL, and NKWD. Residues 355–439 form the KH-like domain; that stretch reads VKLPTPKLTR…PLRIEFRTNK (85 aa).

The protein belongs to the TRAFAC class TrmE-Era-EngA-EngB-Septin-like GTPase superfamily. EngA (Der) GTPase family. Associates with the 50S ribosomal subunit.

Its function is as follows. GTPase that plays an essential role in the late steps of ribosome biogenesis. In Ralstonia pickettii (strain 12J), this protein is GTPase Der.